The chain runs to 99 residues: U2-theraphotoxin-Lsp1a (99 aa).

Residues 1–22 form the signal peptide; that stretch reads MNTIQVIIFAVVLVLTVTVGQA. Residues 23–57 constitute a propeptide that is removed on maturation; that stretch reads DEDSPEASLLRKLKEAEASLFGQNLEESRNSRQKR. 3 cysteine pairs are disulfide-bonded: C58–C73, C65–C78, and C72–C93.

This sequence belongs to the neurotoxin 14 (magi-1) family. 08 (Ltx-4) subfamily. In terms of tissue distribution, expressed by the venom gland.

The protein localises to the secreted. In terms of biological role, insecticidal neurotoxin. This is U2-theraphotoxin-Lsp1a from Lasiodora sp. (strain IBSP 8539) (Brazilian salmon pink birdeater).